A 115-amino-acid polypeptide reads, in one-letter code: Ribonuclease P protein component (115 aa).

This sequence belongs to the RnpA family. Consists of a catalytic RNA component (M1 or rnpB) and a protein subunit.

It carries out the reaction Endonucleolytic cleavage of RNA, removing 5'-extranucleotides from tRNA precursor.. In terms of biological role, RNaseP catalyzes the removal of the 5'-leader sequence from pre-tRNA to produce the mature 5'-terminus. It can also cleave other RNA substrates such as 4.5S RNA. The protein component plays an auxiliary but essential role in vivo by binding to the 5'-leader sequence and broadening the substrate specificity of the ribozyme. In Phytoplasma australiense, this protein is Ribonuclease P protein component.